Here is a 361-residue protein sequence, read N- to C-terminus: S-adenosylmethionine decarboxylase proenzyme (361 aa).

Catalysis depends on residues Glu11 and Glu14. Residue Ser71 is the Schiff-base intermediate with substrate; via pyruvic acid of the active site. Ser71 carries the post-translational modification Pyruvic acid (Ser); by autocatalysis. Cys85 serves as the catalytic Proton donor; for catalytic activity. Catalysis depends on proton acceptor; for processing activity residues Ser234 and His247.

Belongs to the eukaryotic AdoMetDC family. Requires pyruvate as cofactor. In terms of processing, is synthesized initially as an inactive proenzyme. Formation of the active enzyme involves a self-maturation process in which the active site pyruvoyl group is generated from an internal serine residue via an autocatalytic post-translational modification. Two non-identical subunits are generated from the proenzyme in this reaction, and the pyruvate is formed at the N-terminus of the alpha chain, which is derived from the carboxyl end of the proenzyme. The post-translation cleavage follows an unusual pathway, termed non-hydrolytic serinolysis, in which the side chain hydroxyl group of the serine supplies its oxygen atom to form the C-terminus of the beta chain, while the remainder of the serine residue undergoes an oxidative deamination to produce ammonia and the pyruvoyl group blocking the N-terminus of the alpha chain.

It catalyses the reaction S-adenosyl-L-methionine + H(+) = S-adenosyl 3-(methylsulfanyl)propylamine + CO2. It functions in the pathway amine and polyamine biosynthesis; S-adenosylmethioninamine biosynthesis; S-adenosylmethioninamine from S-adenosyl-L-methionine: step 1/1. The protein is S-adenosylmethionine decarboxylase proenzyme (SAMDC) of Daucus carota (Wild carrot).